We begin with the raw amino-acid sequence, 255 residues long: Folate receptor alpha (255 aa).

The signal sequence occupies residues 1–24 (MAHLMTVQLLLLVMWMAECAQSRA). Intrachain disulfides connect cysteine 35/cysteine 63, cysteine 55/cysteine 103, cysteine 64/cysteine 107, cysteine 87/cysteine 173, cysteine 94/cysteine 144, cysteine 133/cysteine 207, cysteine 137/cysteine 187, and cysteine 150/cysteine 167. Asparagine 67 carries N-linked (GlcNAc...) asparagine glycosylation. Residues aspartate 101, tyrosine 105, 122 to 126 (WRKER), 155 to 160 (HKGWNW), and serine 194 contribute to the folate site. Residue asparagine 159 is glycosylated (N-linked (GlcNAc...) asparagine). N-linked (GlcNAc...) asparagine glycosylation is present at asparagine 199. The GPI-anchor amidated serine moiety is linked to residue serine 232. The propeptide at 233 to 255 (GAGFHGTWPLLCSLSLVLLWVIS) is removed in mature form.

Belongs to the folate receptor family. The secreted form is derived from the membrane-bound form either by cleavage of the GPI anchor, or/and by proteolysis catalyzed by a metalloprotease. In terms of tissue distribution, detected in kidney proximal tubules (at protein level).

It localises to the cell membrane. The protein resides in the apical cell membrane. It is found in the basolateral cell membrane. Its subcellular location is the secreted. The protein localises to the cytoplasmic vesicle. It localises to the clathrin-coated vesicle. The protein resides in the endosome. In terms of biological role, binds to folate and reduced folic acid derivatives and mediates delivery of 5-methyltetrahydrofolate and folate analogs into the interior of cells. Has high affinity for folate and folic acid analogs at neutral pH. Exposure to slightly acidic pH after receptor endocytosis triggers a conformation change that strongly reduces its affinity for folates and mediates their release. Required for normal embryonic development and normal cell proliferation. Required for renal folate reabsorption. The sequence is that of Folate receptor alpha (Folr1) from Mus musculus (Mouse).